The primary structure comprises 101 residues: Large ribosomal subunit protein bL21 (101 aa).

Belongs to the bacterial ribosomal protein bL21 family. In terms of assembly, part of the 50S ribosomal subunit. Contacts protein L20.

Functionally, this protein binds to 23S rRNA in the presence of protein L20. The sequence is that of Large ribosomal subunit protein bL21 from Anaeromyxobacter dehalogenans (strain 2CP-1 / ATCC BAA-258).